The primary structure comprises 463 residues: Bifunctional protein HldE (463 aa).

A ribokinase region spans residues 1-315; that stretch reads MRKILVIGDL…LILNQTHPKI (315 aa). 191–194 lines the ATP pocket; that stretch reads NRFE. Asp260 is an active-site residue. Residues 334 to 463 form a cytidylyltransferase region; that stretch reads FTNGCFDILH…IEKIKRAYND (130 aa).

The protein in the N-terminal section; belongs to the carbohydrate kinase PfkB family. It in the C-terminal section; belongs to the cytidylyltransferase family. In terms of assembly, homodimer.

The catalysed reaction is D-glycero-beta-D-manno-heptose 7-phosphate + ATP = D-glycero-beta-D-manno-heptose 1,7-bisphosphate + ADP + H(+). It carries out the reaction D-glycero-beta-D-manno-heptose 1-phosphate + ATP + H(+) = ADP-D-glycero-beta-D-manno-heptose + diphosphate. The protein operates within nucleotide-sugar biosynthesis; ADP-L-glycero-beta-D-manno-heptose biosynthesis; ADP-L-glycero-beta-D-manno-heptose from D-glycero-beta-D-manno-heptose 7-phosphate: step 1/4. It functions in the pathway nucleotide-sugar biosynthesis; ADP-L-glycero-beta-D-manno-heptose biosynthesis; ADP-L-glycero-beta-D-manno-heptose from D-glycero-beta-D-manno-heptose 7-phosphate: step 3/4. In terms of biological role, catalyzes the phosphorylation of D-glycero-D-manno-heptose 7-phosphate at the C-1 position to selectively form D-glycero-beta-D-manno-heptose-1,7-bisphosphate. Its function is as follows. Catalyzes the ADP transfer from ATP to D-glycero-beta-D-manno-heptose 1-phosphate, yielding ADP-D-glycero-beta-D-manno-heptose. The chain is Bifunctional protein HldE from Helicobacter acinonychis (strain Sheeba).